A 266-amino-acid polypeptide reads, in one-letter code: Glucosamine-6-phosphate deaminase (266 aa).

D72 serves as the catalytic Proton acceptor; for enolization step. D141 functions as the For ring-opening step in the catalytic mechanism. H143 (proton acceptor; for ring-opening step) is an active-site residue. Catalysis depends on E148, which acts as the For ring-opening step.

Belongs to the glucosamine/galactosamine-6-phosphate isomerase family. NagB subfamily. Homohexamer.

It carries out the reaction alpha-D-glucosamine 6-phosphate + H2O = beta-D-fructose 6-phosphate + NH4(+). It functions in the pathway amino-sugar metabolism; N-acetylneuraminate degradation; D-fructose 6-phosphate from N-acetylneuraminate: step 5/5. Its activity is regulated as follows. Allosterically activated by N-acetylglucosamine 6-phosphate (GlcNAc6P). Catalyzes the reversible isomerization-deamination of glucosamine 6-phosphate (GlcN6P) to form fructose 6-phosphate (Fru6P) and ammonium ion. This is Glucosamine-6-phosphate deaminase from Tolumonas auensis (strain DSM 9187 / NBRC 110442 / TA 4).